The following is a 551-amino-acid chain: Arginine--tRNA ligase (551 aa).

Residues 125–135 (ANPTGPLHIGH) carry the 'HIGH' region motif.

The protein belongs to the class-I aminoacyl-tRNA synthetase family. As to quaternary structure, monomer.

The protein resides in the cytoplasm. The enzyme catalyses tRNA(Arg) + L-arginine + ATP = L-arginyl-tRNA(Arg) + AMP + diphosphate. This Nitratidesulfovibrio vulgaris (strain DP4) (Desulfovibrio vulgaris) protein is Arginine--tRNA ligase.